We begin with the raw amino-acid sequence, 355 residues long: UDP-N-acetylglucosamine--N-acetylmuramyl-(pentapeptide) pyrophosphoryl-undecaprenol N-acetylglucosamine transferase (355 aa).

Residues 14 to 16 (TGG), Asn-126, Arg-162, Ser-190, Ile-243, 262 to 267 (ALTVSE), and Gln-287 contribute to the UDP-N-acetyl-alpha-D-glucosamine site.

It belongs to the glycosyltransferase 28 family. MurG subfamily.

It is found in the cell inner membrane. The enzyme catalyses di-trans,octa-cis-undecaprenyl diphospho-N-acetyl-alpha-D-muramoyl-L-alanyl-D-glutamyl-meso-2,6-diaminopimeloyl-D-alanyl-D-alanine + UDP-N-acetyl-alpha-D-glucosamine = di-trans,octa-cis-undecaprenyl diphospho-[N-acetyl-alpha-D-glucosaminyl-(1-&gt;4)]-N-acetyl-alpha-D-muramoyl-L-alanyl-D-glutamyl-meso-2,6-diaminopimeloyl-D-alanyl-D-alanine + UDP + H(+). It functions in the pathway cell wall biogenesis; peptidoglycan biosynthesis. Cell wall formation. Catalyzes the transfer of a GlcNAc subunit on undecaprenyl-pyrophosphoryl-MurNAc-pentapeptide (lipid intermediate I) to form undecaprenyl-pyrophosphoryl-MurNAc-(pentapeptide)GlcNAc (lipid intermediate II). The sequence is that of UDP-N-acetylglucosamine--N-acetylmuramyl-(pentapeptide) pyrophosphoryl-undecaprenol N-acetylglucosamine transferase from Vibrio campbellii (strain ATCC BAA-1116).